The chain runs to 338 residues: RNA 3'-terminal phosphate cyclase (338 aa).

Residues glutamine 103 and 283-287 (YLADQ) each bind ATP. The Tele-AMP-histidine intermediate role is filled by histidine 308.

The protein belongs to the RNA 3'-terminal cyclase family. Type 1 subfamily.

It localises to the cytoplasm. It catalyses the reaction a 3'-end 3'-phospho-ribonucleotide-RNA + ATP = a 3'-end 2',3'-cyclophospho-ribonucleotide-RNA + AMP + diphosphate. Catalyzes the conversion of 3'-phosphate to a 2',3'-cyclic phosphodiester at the end of RNA. The mechanism of action of the enzyme occurs in 3 steps: (A) adenylation of the enzyme by ATP; (B) transfer of adenylate to an RNA-N3'P to produce RNA-N3'PP5'A; (C) and attack of the adjacent 2'-hydroxyl on the 3'-phosphorus in the diester linkage to produce the cyclic end product. The biological role of this enzyme is unknown but it is likely to function in some aspects of cellular RNA processing. This Escherichia coli O8 (strain IAI1) protein is RNA 3'-terminal phosphate cyclase.